Reading from the N-terminus, the 453-residue chain is Glutamyl-tRNA(Gln) amidotransferase subunit A (453 aa).

Active-site charge relay system residues include lysine 56 and serine 131. The Acyl-ester intermediate role is filled by serine 155.

This sequence belongs to the amidase family. GatA subfamily. In terms of assembly, heterotrimer of A, B and C subunits.

The enzyme catalyses L-glutamyl-tRNA(Gln) + L-glutamine + ATP + H2O = L-glutaminyl-tRNA(Gln) + L-glutamate + ADP + phosphate + H(+). Allows the formation of correctly charged Gln-tRNA(Gln) through the transamidation of misacylated Glu-tRNA(Gln) in organisms which lack glutaminyl-tRNA synthetase. The reaction takes place in the presence of glutamine and ATP through an activated gamma-phospho-Glu-tRNA(Gln). This is Glutamyl-tRNA(Gln) amidotransferase subunit A from Campylobacter jejuni subsp. doylei (strain ATCC BAA-1458 / RM4099 / 269.97).